Here is a 111-residue protein sequence, read N- to C-terminus: uncharacterized protein (111 aa).

It belongs to the asfivirus E111R family.

This is an uncharacterized protein from Ornithodoros (relapsing fever ticks).